We begin with the raw amino-acid sequence, 328 residues long: MDAQNKEVAALIEKIAGIQAAIAELPSLSPSPEVDRLFTDLVTACVPPSPVDVTKLSPEHQRMREALIRLCSAAEGKLEAHYADLLATFDNPLDHLGLFPYYSNYVNLSRLEYELLARHVPGIAPARVAFVGSGPLPFSSLVLAAHHLPETQFDNYDLCGAANERARKLFGATADGVGARMSFHTADVADLTQELGAYDVVFLAALVGMAAEEKAKVIAHLGAHMVEGASLVVRSARPRGFLYPIVDPEDIRRGGFEVLAVHHPEGEVINSVIVARKAVEAQLSGPQNGDAHARGAVPLVSPPCNFSTKMEASALEKSEELTAKELAF.

Belongs to the nicotianamine synthase (NAS)-like family. As to expression, in roots but not in leaves.

The catalysed reaction is 3 S-adenosyl-L-methionine = nicotianamine + 3 S-methyl-5'-thioadenosine + 3 H(+). Its function is as follows. Synthesizes nicotianamine, a polyamine that is the first intermediate in the synthesis of the phytosiderophores of the mugineic acid type found in gramineae which serves as a sensor for the physiological iron status within the plant, and/or might be involved in the transport of iron. The protein is Nicotianamine synthase 1 (NAS1) of Hordeum vulgare (Barley).